A 393-amino-acid chain; its full sequence is 4-hydroxyphenylpyruvate dioxygenase (393 aa).

2 VOC domains span residues 17–148 (AFDH…LLER) and 179–339 (FLDH…IFSK). Positions 182, 267, and 350 each coordinate Fe cation.

The protein belongs to the 4HPPD family. Requires Fe cation as cofactor.

The enzyme catalyses 3-(4-hydroxyphenyl)pyruvate + O2 = homogentisate + CO2. It participates in amino-acid degradation; L-phenylalanine degradation; acetoacetate and fumarate from L-phenylalanine: step 3/6. Functionally, key enzyme in the degradation of tyrosine. In Caenorhabditis briggsae, this protein is 4-hydroxyphenylpyruvate dioxygenase (hpd-1).